The following is a 774-amino-acid chain: Cilium assembly protein DZIP1L (774 aa).

The C2H2-type zinc-finger motif lies at 166–189 (HTCHLCDKTFMNATFLRGHIQRRH). The stretch at 204 to 450 (LGEVLEELRA…RKVLAALRKN (247 aa)) forms a coiled coil. 3 disordered regions span residues 415–435 (MPKA…ASLE), 515–674 (NKEV…ASSG), and 686–774 (KQLE…IPGW). Over residues 421 to 433 (TEEDSSEEELEAS) the composition is skewed to acidic residues. Phosphoserine occurs at positions 425 and 426. Residues 515-526 (NKEVSSRVKQRW) are compositionally biased toward basic and acidic residues. Low complexity predominate over residues 597 to 616 (GPSSTPVSPGSGLSSTPPFS).

Belongs to the DZIP C2H2-type zinc-finger protein family. As to quaternary structure, interacts with SEPTIN2.

Its subcellular location is the cytoplasm. The protein resides in the cytoskeleton. It localises to the cilium basal body. The protein localises to the microtubule organizing center. It is found in the centrosome. Its subcellular location is the centriole. Functionally, involved in primary cilium formation. Probably acts as a transition zone protein required for localization of PKD1/PC1 and PKD2/PC2 to the ciliary membrane. This chain is Cilium assembly protein DZIP1L, found in Mus musculus (Mouse).